The chain runs to 64 residues: Prokaryotic ubiquitin-like protein Pup (64 aa).

Residues 1 to 11 (MAQEQTKRTGG) show a composition bias toward basic and acidic residues. Positions 1–37 (MAQEQTKRTGGGDEDDTPGADGAAGQERREKLAEDTD) are disordered. The tract at residues 21-58 (DGAAGQERREKLAEDTDDLLDEIDDVLEENAEDFVRAY) is ARC ATPase binding. Residues 24–52 (AGQERREKLAEDTDDLLDEIDDVLEENAE) adopt a coiled-coil conformation. Position 64 is a deamidated glutamine (Gln64). Gln64 is covalently cross-linked (Isoglutamyl lysine isopeptide (Gln-Lys) (interchain with K-? in acceptor proteins)).

This sequence belongs to the prokaryotic ubiquitin-like protein family. As to quaternary structure, strongly interacts with the proteasome-associated ATPase ARC through a hydrophobic interface; the interacting region of Pup lies in its C-terminal half. There is one Pup binding site per ARC hexamer ring. Post-translationally, is modified by deamidation of its C-terminal glutamine to glutamate by the deamidase Dop, a prerequisite to the subsequent pupylation process.

The protein operates within protein degradation; proteasomal Pup-dependent pathway. Its function is as follows. Protein modifier that is covalently attached to lysine residues of substrate proteins, thereby targeting them for proteasomal degradation. The tagging system is termed pupylation. This chain is Prokaryotic ubiquitin-like protein Pup, found in Rhodococcus jostii (strain RHA1).